Consider the following 206-residue polypeptide: Protein-methionine-sulfoxide reductase heme-binding subunit MsrQ (206 aa).

6 helical membrane-spanning segments follow: residues 10–30, 42–62, 75–95, 110–130, 147–167, and 169–189; these read VFIAAAVWPLFWLYEAWSAVL, LGLGTLILLLITLAMTPLQKL, LGLWCFAYVVLHLAAYCVFVL, PYIIVGALGFLLLLVLAVTSN, LVYVVLGLGLLHMLWIVRADL, and EWAIYASIGALLLVLRIPPVM.

The protein belongs to the MsrQ family. Heterodimer of a catalytic subunit (MsrP) and a heme-binding subunit (MsrQ). The cofactor is FMN. It depends on heme b as a cofactor.

The protein localises to the cell inner membrane. In terms of biological role, part of the MsrPQ system that repairs oxidized periplasmic proteins containing methionine sulfoxide residues (Met-O), using respiratory chain electrons. Thus protects these proteins from oxidative-stress damage caused by reactive species of oxygen and chlorine generated by the host defense mechanisms. MsrPQ is essential for the maintenance of envelope integrity under bleach stress, rescuing a wide series of structurally unrelated periplasmic proteins from methionine oxidation. MsrQ provides electrons for reduction to the reductase catalytic subunit MsrP, using the quinone pool of the respiratory chain. The chain is Protein-methionine-sulfoxide reductase heme-binding subunit MsrQ from Pseudomonas fluorescens (strain SBW25).